A 219-amino-acid chain; its full sequence is ATP phosphoribosyltransferase (219 aa).

Belongs to the ATP phosphoribosyltransferase family. Short subfamily. In terms of assembly, heteromultimer composed of HisG and HisZ subunits.

The protein resides in the cytoplasm. The enzyme catalyses 1-(5-phospho-beta-D-ribosyl)-ATP + diphosphate = 5-phospho-alpha-D-ribose 1-diphosphate + ATP. It participates in amino-acid biosynthesis; L-histidine biosynthesis; L-histidine from 5-phospho-alpha-D-ribose 1-diphosphate: step 1/9. Its function is as follows. Catalyzes the condensation of ATP and 5-phosphoribose 1-diphosphate to form N'-(5'-phosphoribosyl)-ATP (PR-ATP). Has a crucial role in the pathway because the rate of histidine biosynthesis seems to be controlled primarily by regulation of HisG enzymatic activity. The sequence is that of ATP phosphoribosyltransferase from Clostridium kluyveri (strain NBRC 12016).